Here is a 276-residue protein sequence, read N- to C-terminus: D-aminoacyl-tRNA deacylase (276 aa).

It belongs to the DtdA deacylase family. As to quaternary structure, monomer. Zn(2+) is required as a cofactor.

It catalyses the reaction a D-aminoacyl-tRNA + H2O = a tRNA + a D-alpha-amino acid + H(+). It carries out the reaction glycyl-tRNA(Ala) + H2O = tRNA(Ala) + glycine + H(+). Its function is as follows. D-aminoacyl-tRNA deacylase with broad substrate specificity. By recycling D-aminoacyl-tRNA to D-amino acids and free tRNA molecules, this enzyme counteracts the toxicity associated with the formation of D-aminoacyl-tRNA entities in vivo. This chain is D-aminoacyl-tRNA deacylase, found in Korarchaeum cryptofilum (strain OPF8).